The chain runs to 545 residues: Chaperonin GroEL (545 aa).

ATP is bound by residues 30 to 33, Lys-51, 87 to 91, Gly-415, 479 to 481, and Asp-495; these read TLGP, DGTTT, and NAA.

It belongs to the chaperonin (HSP60) family. Forms a cylinder of 14 subunits composed of two heptameric rings stacked back-to-back. Interacts with the co-chaperonin GroES.

The protein localises to the cytoplasm. The enzyme catalyses ATP + H2O + a folded polypeptide = ADP + phosphate + an unfolded polypeptide.. Together with its co-chaperonin GroES, plays an essential role in assisting protein folding. The GroEL-GroES system forms a nano-cage that allows encapsulation of the non-native substrate proteins and provides a physical environment optimized to promote and accelerate protein folding. The protein is Chaperonin GroEL of Salmonella agona (strain SL483).